The chain runs to 191 residues: Protein GrpE (191 aa).

This sequence belongs to the GrpE family. As to quaternary structure, homodimer.

It localises to the cytoplasm. In terms of biological role, participates actively in the response to hyperosmotic and heat shock by preventing the aggregation of stress-denatured proteins, in association with DnaK and GrpE. It is the nucleotide exchange factor for DnaK and may function as a thermosensor. Unfolded proteins bind initially to DnaJ; upon interaction with the DnaJ-bound protein, DnaK hydrolyzes its bound ATP, resulting in the formation of a stable complex. GrpE releases ADP from DnaK; ATP binding to DnaK triggers the release of the substrate protein, thus completing the reaction cycle. Several rounds of ATP-dependent interactions between DnaJ, DnaK and GrpE are required for fully efficient folding. This Listeria monocytogenes serotype 1/2a (strain 10403S) protein is Protein GrpE.